Consider the following 148-residue polypeptide: Large-conductance mechanosensitive channel (148 aa).

2 helical membrane passes run 12 to 32 (AFAM…GGAF) and 85 to 105 (GQFL…FLFI).

Belongs to the MscL family. In terms of assembly, homopentamer.

The protein localises to the cell inner membrane. Its function is as follows. Channel that opens in response to stretch forces in the membrane lipid bilayer. May participate in the regulation of osmotic pressure changes within the cell. The protein is Large-conductance mechanosensitive channel of Bacteroides thetaiotaomicron (strain ATCC 29148 / DSM 2079 / JCM 5827 / CCUG 10774 / NCTC 10582 / VPI-5482 / E50).